A 153-amino-acid polypeptide reads, in one-letter code: Large ribosomal subunit protein uL29 (153 aa).

Residues 1-83 (MNKELRAKTN…KEQTKQKEIQ (83 aa)) form a large ribosomal subunit protein uL29 region. The unknown stretch occupies residues 84–153 (ESVKKIKQLR…NVKAKTKKKG (70 aa)). Residues 100-121 (NKEKRLANAEKVKAAPKPEQKT) are compositionally biased toward basic and acidic residues. Residues 100 to 153 (NKEKRLANAEKVKAAPKPEQKTKKVKKAPKKTETVKPTTNKNKKNVKAKTKKKG) are disordered. Basic residues predominate over residues 140–153 (KNKKNVKAKTKKKG).

Belongs to the universal ribosomal protein uL29 family.

In Mycoplasmoides gallisepticum (strain R(low / passage 15 / clone 2)) (Mycoplasma gallisepticum), this protein is Large ribosomal subunit protein uL29.